The chain runs to 720 residues: Denticleless protein homolog (720 aa).

3 WD repeats span residues 43 to 85 (GMPV…TTKL), 92 to 131 (AHSN…LLGI), and 134 to 174 (GHQC…KDGF). Residues 164 to 167 (WDTR) carry the DDB1-binding motif motif. A Nuclear localization signal motif is present at residues 193–200 (PSKLRKKR). WD repeat units lie at residues 211 to 250 (DFQQ…AAYR), 266 to 305 (TRKL…TFPV), 310 to 351 (GHQN…LPPR), and 355 to 395 (GHSQ…EEEK). A DDB1-binding motif motif is present at residues 240 to 243 (WDLR). 4 disordered regions span residues 411 to 437 (KPEE…VGSP), 476 to 495 (PAKL…PSSK), 528 to 552 (QSLL…KRRL), and 607 to 698 (NEHE…TSPK). Over residues 528–542 (QSLLETSSTPKAQHS) the composition is skewed to polar residues. Composition is skewed to basic and acidic residues over residues 543 to 552 (QAEKRAKRRL) and 642 to 660 (CERD…ERKN).

The protein belongs to the WD repeat cdt2 family. Component of the DCX(DTL) E3 ubiquitin ligase complex, at least composed of CUL4 (CUL4A or CUL4B), DDB1, DTL/CDT2 and RBX1.

It localises to the nucleus. The protein localises to the cytoplasm. Its subcellular location is the cytoskeleton. The protein resides in the microtubule organizing center. It is found in the centrosome. It localises to the chromosome. It functions in the pathway protein modification; protein ubiquitination. In terms of biological role, substrate-specific adapter of a DCX (DDB1-CUL4-X-box) E3 ubiquitin-protein ligase complex required for cell cycle control, DNA damage response and translesion DNA synthesis. The DCX(DTL) complex, also named CRL4(CDT2) complex, mediates the polyubiquitination and subsequent degradation of CDT1, CDKN1A/p21(CIP1), KMT5A and SDE2. CDT1 degradation in response to DNA damage is necessary to ensure proper cell cycle regulation of DNA replication. CDKN1A/p21(CIP1) degradation during S phase or following UV irradiation is essential to control replication licensing. KMT5A degradation is also important for a proper regulation of mechanisms such as TGF-beta signaling, cell cycle progression, DNA repair and cell migration. Most substrates require their interaction with PCNA for their polyubiquitination: substrates interact with PCNA via their PIP-box, and those containing the 'K+4' motif in the PIP box, recruit the DCX(DTL) complex, leading to their degradation. In undamaged proliferating cells, the DCX(DTL) complex also promotes the 'Lys-164' monoubiquitination of PCNA, thereby being involved in PCNA-dependent translesion DNA synthesis. May play a role in the regulation of the circadian clock. The polypeptide is Denticleless protein homolog (DTL) (Gallus gallus (Chicken)).